Here is a 484-residue protein sequence, read N- to C-terminus: Zinc metalloproteinase-disintegrin stejnitin (484 aa).

The signal sequence occupies residues 1 to 20 (MIQVLLVTICLAVFPYQGNS). Positions 21–192 (IILESGNVND…ASQLNLTPDE (172 aa)) are excised as a propeptide. The residue at position 193 (Gln-193) is a Pyrrolidone carboxylic acid. A Peptidase M12B domain is found at 194 to 392 (RFIELVIVAD…YTSRCLYNGP (199 aa)). Position 197 (Glu-197) interacts with Ca(2+). An N-linked (GlcNAc...) asparagine glycan is attached at Asn-254. A Ca(2+)-binding site is contributed by Asp-281. 3 disulfide bridges follow: Cys-305-Cys-387, Cys-345-Cys-369, and Cys-347-Cys-352. Residues His-330, His-334, and His-340 each coordinate Zn(2+). Ca(2+)-binding residues include Cys-387, Asn-390, Val-402, Asn-405, Glu-409, Glu-412, and Asp-415. Positions 400–484 (PPVCGNYYVE…GDCPRNPFRA (85 aa)) constitute a Disintegrin domain. Intrachain disulfides connect Cys-403/Cys-422, Cys-414/Cys-432, Cys-416/Cys-427, Cys-426/Cys-449, Cys-440/Cys-446, Cys-445/Cys-470, and Cys-458/Cys-477. The short motif at 462–464 (KGD) is the Cell attachment site element.

This sequence belongs to the venom metalloproteinase (M12B) family. P-II subfamily. P-IIb sub-subfamily. Zn(2+) is required as a cofactor. Post-translationally, the N-terminus is blocked. In terms of tissue distribution, expressed by the venom gland.

It is found in the secreted. Functionally, snake venom zinc metalloproteinase that inhibits ADP-induced platelet aggregation in human platelet-rich plasma (IC(50) is 175 nM) and cleaves alpha-(FGA) and subsequently the beta-chain (FGG) of bovine fibrinogen, leaving the gamma-chain unaffected. It is also able to inhibit proliferatin of ECV304 cells by inducing apoptosis of these cells. In Trimeresurus stejnegeri (Chinese green tree viper), this protein is Zinc metalloproteinase-disintegrin stejnitin.